We begin with the raw amino-acid sequence, 345 residues long: Calcium/calmodulin-dependent protein kinase type 1 (345 aa).

Residues 1 to 23 form a disordered region; sequence MPLFGSKKETAKKSSKKDKDEGK. The region spanning 31-287 is the Protein kinase domain; it reads YILKDLLGTG…CKQALGHPWI (257 aa). Residues 37–45 and Lys-61 contribute to the ATP site; that span reads LGTGAFSQV. Asp-153 (proton acceptor) is an active-site residue. An autoinhibitory domain region spans residues 287–327; sequence ISGNAASTENIHSSVSEQLKKNFAKSRWRQAYHATAVIRQM. Residues 307 to 328 are calmodulin-binding; that stretch reads KNFAKSRWRQAYHATAVIRQMR.

This sequence belongs to the protein kinase superfamily. CAMK Ser/Thr protein kinase family. CaMK subfamily. In terms of tissue distribution, highly expressed in hepatopancreas and to a lesser extent in gills. Low expression in hemocytes, testis, ovary, heart, eyestalk, muscle and epidermis.

The catalysed reaction is L-seryl-[protein] + ATP = O-phospho-L-seryl-[protein] + ADP + H(+). It carries out the reaction L-threonyl-[protein] + ATP = O-phospho-L-threonyl-[protein] + ADP + H(+). Its activity is regulated as follows. Activated by Ca(2+)/calmodulin. Binding of calmodulin results in conformational change that relieves intrasteric autoinhibition. Calcium/calmodulin-dependent protein kinase that operates in the calcium-triggered CaMKK-CaMK1 signaling cascade and, upon calcium influx, regulates transcription activators activity, cell cycle, hormone production, cell differentiation, actin filament organization and neurite outgrowth. Involved in molting. In Macrobrachium nipponense (Oriental river shrimp), this protein is Calcium/calmodulin-dependent protein kinase type 1.